Consider the following 507-residue polypeptide: L-amino-acid oxidase (507 aa).

An N-terminal signal peptide occupies residues 1 to 19 (MNVLFIFSLLFLAALESCA). Cys-29 and Cys-192 are oxidised to a cystine. Residues 62–63 (MA), 82–83 (EA), Arg-90, and 106–109 (GPMR) each bind FAD. Arg-109 lines the substrate pocket. Residues Asn-191 and Asn-213 are each glycosylated (N-linked (GlcNAc...) asparagine). Val-280 serves as a coordination point for FAD. Cysteines 348 and 429 form a disulfide. Residue Asn-378 is glycosylated (N-linked (GlcNAc...) asparagine). Substrate is bound at residue Tyr-389. Residues Glu-473 and 480 to 485 (GWIDST) contribute to the FAD site.

This sequence belongs to the flavin monoamine oxidase family. FIG1 subfamily. As to quaternary structure, homodimer; non-covalently linked. Requires FAD as cofactor. In terms of tissue distribution, expressed by the venom gland.

The protein localises to the secreted. It carries out the reaction an L-alpha-amino acid + O2 + H2O = a 2-oxocarboxylate + H2O2 + NH4(+). It catalyses the reaction L-leucine + O2 + H2O = 4-methyl-2-oxopentanoate + H2O2 + NH4(+). In terms of biological role, catalyzes an oxidative deamination of predominantly hydrophobic and aromatic L-amino acids, thus producing hydrogen peroxide that may contribute to the diverse toxic effects of this enzyme. Shows activity on L-Leu. Exhibits diverse biological activities, such as hemorrhage, hemolysis, edema, apoptosis of vascular endothelial cells or tumor cell lines, antibacterial and antiparasitic activities. This protein induces platelet aggregation by both hydrogen peroxide production and binding to platelet membrane proteins (that would enhance the sensitivity of platelets to hydrogen peroxide). Effects of snake L-amino oxidases on platelets are controversial, since they either induce aggregation or inhibit agonist-induced aggregation. These different effects are probably due to different experimental conditions. In Naja atra (Chinese cobra), this protein is L-amino-acid oxidase.